Here is a 370-residue protein sequence, read N- to C-terminus: uncharacterized protein (370 aa).

One can recognise an OBG-type G domain in the interval 62-293 (ATVALVGFPS…LKERMWRALG (232 aa)). Residues 68–75 (GFPSVGKS), 114–118 (DVPGL), and 243–246 (NKVD) contribute to the GTP site. The TGS domain maps to 293-368 (GLIRIYMDKP…EDEDVLRVVA (76 aa)).

Belongs to the TRAFAC class OBG-HflX-like GTPase superfamily. OBG GTPase family.

This is an uncharacterized protein from Halobacterium salinarum (strain ATCC 700922 / JCM 11081 / NRC-1) (Halobacterium halobium).